A 351-amino-acid polypeptide reads, in one-letter code: DNA integrity scanning protein DisA (351 aa).

The region spanning 4–142 (RSGFWQVLQQ…GPMKYILRDF (139 aa)) is the DAC domain. Residues Gly-71, Leu-89, and 102-106 (TRHRT) contribute to the ATP site.

It belongs to the DisA family. In terms of assembly, homooctamer. The cofactor is Mg(2+).

It carries out the reaction 2 ATP = 3',3'-c-di-AMP + 2 diphosphate. Functionally, participates in a DNA-damage check-point that is active prior to asymmetric division when DNA is damaged. DisA forms globular foci that rapidly scan along the chromosomes during sporulation, searching for lesions. When a lesion is present, DisA pauses at the lesion site. This triggers a cellular response that culminates in a temporary block in sporulation initiation. Its function is as follows. Also has diadenylate cyclase activity, catalyzing the condensation of 2 ATP molecules into cyclic di-AMP (c-di-AMP). c-di-AMP acts as a signaling molecule that couples DNA integrity with progression of sporulation. The rise in c-di-AMP level generated by DisA while scanning the chromosome, operates as a positive signal that advances sporulation; upon encountering a lesion, the DisA focus arrests at the damaged site and halts c-di-AMP synthesis. In Symbiobacterium thermophilum (strain DSM 24528 / JCM 14929 / IAM 14863 / T), this protein is DNA integrity scanning protein DisA.